The sequence spans 640 residues: Chaperone protein DnaK (640 aa).

A Phosphothreonine; by autocatalysis modification is found at T201. Residues 603-621 (AASADQGGAPGADAGNAGK) are compositionally biased toward low complexity. Residues 603–625 (AASADQGGAPGADAGNAGKAQDD) form a disordered region.

This sequence belongs to the heat shock protein 70 family.

Its function is as follows. Acts as a chaperone. This chain is Chaperone protein DnaK, found in Stenotrophomonas maltophilia (strain K279a).